Here is a 1331-residue protein sequence, read N- to C-terminus: ABC multidrug transporter MDR2 (1331 aa).

2 stretches are compositionally biased toward basic and acidic residues: residues 1 to 20 (MVEV…KQEN) and 31 to 41 (SDKEKVAKKGN). The disordered stretch occupies residues 1 to 51 (MVEVSEKPNTQDDGVSKQENRNPASSSSSTSDKEKVAKKGNSDATKSSTPE). A run of 4 helical transmembrane segments spans residues 93–113 (MIFL…LPLF), 147–167 (YFVY…VGFI), 219–239 (KVGL…IGYV), and 242–262 (WKLA…MGGI). An ABC transmembrane type-1 1 domain is found at 97–387 (AIVSLASIAA…VAPNTQAFAS (291 aa)). N293 is a glycosylation site (N-linked (GlcNAc...) asparagine). The next 2 helical transmembrane spans lie at 325–345 (LGIM…LGFW) and 358–378 (LSAI…IGNV). Residues 422-667 (IEFRGIKHIY…KGTYLQLVEA (246 aa)) enclose the ABC transporter 1 domain. 457–464 (GPSGSGKS) contributes to the ATP binding site. Residue N529 is glycosylated (N-linked (GlcNAc...) asparagine). 2 consecutive transmembrane segments (helical) span residues 762–782 (LCGF…SVFF) and 810–830 (FLML…IFAI). The ABC transmembrane type-1 2 domain occupies 764–1051 (GFFFAVLSGA…VFSFSPDMGK (288 aa)). N860 carries N-linked (GlcNAc...) asparagine glycosylation. 4 helical membrane-spanning segments follow: residues 884–904 (LGTI…ALAF), 910–930 (LVCI…FWIL), 995–1015 (ASQS…GGLL), and 1025–1045 (FFLC…VFSF). An ABC transporter 2 domain is found at 1086-1324 (IEFRDVHFRY…KGRYYELVHM (239 aa)). N1108 is a glycosylation site (N-linked (GlcNAc...) asparagine). Residue 1121–1128 (GPSGCGKS) participates in ATP binding.

Belongs to the ABC transporter superfamily. ABCB family. Multidrug resistance exporter (TC 3.A.1.201) subfamily.

The protein localises to the cell membrane. The catalysed reaction is itraconazole(in) + ATP + H2O = itraconazole(out) + ADP + phosphate + H(+). In terms of biological role, pleiotropic ABC efflux transporter that may be involved in the modulation susceptibility to a wide range of unrelated cytotoxic compounds, including terbinafine, 4-nitroquinoline N-oxide, and ethidium bromide. May play a role in pathogenicity. This chain is ABC multidrug transporter MDR2, found in Trichophyton interdigitale (strain MR816).